The chain runs to 39 residues: Photosystem II reaction center protein X (39 aa).

Residues Ser-11–Ser-31 form a helical membrane-spanning segment.

Belongs to the PsbX family. Type 1 subfamily. PSII is composed of 1 copy each of membrane proteins PsbA, PsbB, PsbC, PsbD, PsbE, PsbF, PsbH, PsbI, PsbJ, PsbK, PsbL, PsbM, PsbT, PsbX, PsbY, PsbZ, Psb30/Ycf12, at least 3 peripheral proteins of the oxygen-evolving complex and a large number of cofactors. It forms dimeric complexes.

The protein resides in the plastid. It is found in the cyanelle thylakoid membrane. In terms of biological role, involved in the binding and/or turnover of quinones at the Q(B) site of photosystem II (PSII). PSII is a light-driven water plastoquinone oxidoreductase, using light energy to abstract electrons from H(2)O, generating a proton gradient subsequently used for ATP formation. The polypeptide is Photosystem II reaction center protein X (Cyanophora paradoxa).